Here is a 291-residue protein sequence, read N- to C-terminus: Ribosomal protein L11 methyltransferase (291 aa).

Positions 136, 159, 181, and 228 each coordinate S-adenosyl-L-methionine.

Belongs to the methyltransferase superfamily. PrmA family.

The protein resides in the cytoplasm. It catalyses the reaction L-lysyl-[protein] + 3 S-adenosyl-L-methionine = N(6),N(6),N(6)-trimethyl-L-lysyl-[protein] + 3 S-adenosyl-L-homocysteine + 3 H(+). Methylates ribosomal protein L11. This Rhizobium meliloti (strain 1021) (Ensifer meliloti) protein is Ribosomal protein L11 methyltransferase.